Consider the following 369-residue polypeptide: Mycofactocin maturase MftC (369 aa).

In terms of domain architecture, Radical SAM core spans leucine 16–serine 232. Residues cysteine 30, cysteine 34, cysteine 37, cysteine 251, cysteine 258, cysteine 269, cysteine 310, cysteine 313, cysteine 319, cysteine 323, and cysteine 341 each coordinate [4Fe-4S] cluster. Residues alanine 347–glutamate 369 form a disordered region. Basic and acidic residues predominate over residues glutamine 352 to glutamate 369.

The protein belongs to the radical SAM superfamily. MftC family. As to quaternary structure, interacts with MftB. The cofactor is [4Fe-4S] cluster.

The enzyme catalyses [mycofactocin precursor peptide]-C-terminal glycyl-L-valyl-L-tyrosine + S-adenosyl-L-methionine = [mycofactocin precursor peptide]-C-terminal glycyl-N-{[2-(4-hydroxyphenyl)ethenyl]-3-methylbutanamide} + 5'-deoxyadenosine + L-methionine + CO2. The catalysed reaction is [mycofactocin precursor peptide]-C-terminal glycyl-N-{[2-(4-hydroxyphenyl)ethenyl]-3-methylbutanamide} + AH2 + S-adenosyl-L-methionine = [mycofactocin precursor peptide]-C-terminal glycyl-N-{5-[(4-hydroxyphenyl)methyl]-4,4-dimethyl-2-oxopyrrolidin-3-yl}acetamide + 5'-deoxyadenosine + L-methionine + A + H(+). Functionally, radical S-adenosylmethionine (SAM) enzyme responsible for the first step of the biosynthesis of the enzyme cofactor mycofactocin (MFT). Catalyzes two reactions at the C-terminus of the mycofactocin precursor (the MftA peptide). The first one is the oxidative decarboxylation of the C-terminal L-tyrosine of MftA, forming an unsaturated tyramine moiety. The second reaction is the cross-linking of the tyramine with the penultimate L-valine residue, forming a five-membered lactam ring. Its activity requires the presence of the MftB chaperone. The protein is Mycofactocin maturase MftC of Mycobacterium ulcerans (strain Agy99).